The chain runs to 388 residues: Autophagy-related protein 21 (388 aa).

2 WD repeats span residues 179–219 (CHRS…KVHE) and 224–263 (SYTAQISCLSFNVDATVLCCSSNTGTVHFFRLDDVDRRRS). The L/FRRG motif signature appears at 220–224 (FRRGS).

Belongs to the WD repeat PROPPIN family.

It is found in the cytoplasm. It localises to the membrane. The protein localises to the vacuole membrane. Involved in peroxisome sequestration to the vacuole during macropexophagy. Also required for microautophagy. This chain is Autophagy-related protein 21 (ATG21), found in Pichia angusta (Yeast).